Reading from the N-terminus, the 479-residue chain is Ribulose bisphosphate carboxylase large chain (479 aa).

Positions 1–2 (MS) are excised as a propeptide. At Pro3 the chain carries N-acetylproline. Positions 123 and 173 each coordinate substrate. Lys175 (proton acceptor) is an active-site residue. Position 177 (Lys177) interacts with substrate. Mg(2+) is bound by residues Lys201, Asp203, and Glu204. An N6-carboxylysine modification is found at Lys201. His294 functions as the Proton acceptor in the catalytic mechanism. The substrate site is built by Arg295, His327, and Ser379.

The protein belongs to the RuBisCO large chain family. Type I subfamily. Heterohexadecamer of 8 large chains and 8 small chains; disulfide-linked. The disulfide link is formed within the large subunit homodimers. It depends on Mg(2+) as a cofactor. The disulfide bond which can form in the large chain dimeric partners within the hexadecamer appears to be associated with oxidative stress and protein turnover.

Its subcellular location is the plastid. It is found in the chloroplast. It catalyses the reaction 2 (2R)-3-phosphoglycerate + 2 H(+) = D-ribulose 1,5-bisphosphate + CO2 + H2O. It carries out the reaction D-ribulose 1,5-bisphosphate + O2 = 2-phosphoglycolate + (2R)-3-phosphoglycerate + 2 H(+). In terms of biological role, ruBisCO catalyzes two reactions: the carboxylation of D-ribulose 1,5-bisphosphate, the primary event in carbon dioxide fixation, as well as the oxidative fragmentation of the pentose substrate in the photorespiration process. Both reactions occur simultaneously and in competition at the same active site. In Hordeum vulgare (Barley), this protein is Ribulose bisphosphate carboxylase large chain.